The primary structure comprises 180 residues: Large ribosomal subunit protein mL41 (180 aa).

A mitochondrion-targeting transit peptide spans methionine 1–alanine 21.

This sequence belongs to the mitochondrion-specific ribosomal protein mL41 family. Component of the mitochondrial ribosome large subunit (39S) which comprises a 16S rRNA and about 50 distinct proteins.

It is found in the mitochondrion. In Caenorhabditis elegans, this protein is Large ribosomal subunit protein mL41 (mrpl-41).